The following is a 482-amino-acid chain: Ribulose bisphosphate carboxylase large chain (482 aa).

The propeptide occupies 1–2 (MS). Proline 3 carries the N-acetylproline modification. The residue at position 14 (lysine 14) is an N6,N6,N6-trimethyllysine. Asparagine 123 and threonine 173 together coordinate substrate. Lysine 175 serves as the catalytic Proton acceptor. Residue lysine 177 coordinates substrate. Mg(2+) is bound by residues lysine 201, aspartate 203, and glutamate 204. The residue at position 201 (lysine 201) is an N6-carboxylysine. Histidine 294 serves as the catalytic Proton acceptor. 3 residues coordinate substrate: arginine 295, histidine 327, and serine 379.

It belongs to the RuBisCO large chain family. Type I subfamily. As to quaternary structure, heterohexadecamer of 8 large chains and 8 small chains; disulfide-linked. The disulfide link is formed within the large subunit homodimers. It depends on Mg(2+) as a cofactor. Post-translationally, the disulfide bond which can form in the large chain dimeric partners within the hexadecamer appears to be associated with oxidative stress and protein turnover.

It is found in the plastid. Its subcellular location is the chloroplast. The catalysed reaction is 2 (2R)-3-phosphoglycerate + 2 H(+) = D-ribulose 1,5-bisphosphate + CO2 + H2O. It catalyses the reaction D-ribulose 1,5-bisphosphate + O2 = 2-phosphoglycolate + (2R)-3-phosphoglycerate + 2 H(+). RuBisCO catalyzes two reactions: the carboxylation of D-ribulose 1,5-bisphosphate, the primary event in carbon dioxide fixation, as well as the oxidative fragmentation of the pentose substrate in the photorespiration process. Both reactions occur simultaneously and in competition at the same active site. The protein is Ribulose bisphosphate carboxylase large chain of Phytolacca americana (American pokeweed).